Here is a 491-residue protein sequence, read N- to C-terminus: Cytochrome P450 2B2 (491 aa).

At S128 the chain carries Phosphoserine; by PKA. C436 contributes to the heme binding site.

The protein belongs to the cytochrome P450 family. Heme serves as cofactor. Phosphorylation is accompanied by a decrease in enzyme activity.

Its subcellular location is the endoplasmic reticulum membrane. It localises to the microsome membrane. It carries out the reaction an organic molecule + reduced [NADPH--hemoprotein reductase] + O2 = an alcohol + oxidized [NADPH--hemoprotein reductase] + H2O + H(+). Its function is as follows. Cytochromes P450 are a group of heme-thiolate monooxygenases. In liver microsomes, this enzyme is involved in an NADPH-dependent electron transport pathway. It oxidizes a variety of structurally unrelated compounds, including steroids, fatty acids, and xenobiotics. The sequence is that of Cytochrome P450 2B2 (Cyp2b2) from Rattus norvegicus (Rat).